A 393-amino-acid polypeptide reads, in one-letter code: Acetylornithine aminotransferase 1 (393 aa).

A N(2)-acetyl-L-ornithine-binding site is contributed by arginine 131. 215–218 (DEVQ) contacts pyridoxal 5'-phosphate. Lysine 244 carries the post-translational modification N6-(pyridoxal phosphate)lysine. A N(2)-acetyl-L-ornithine-binding site is contributed by threonine 272. Threonine 273 provides a ligand contact to pyridoxal 5'-phosphate.

It belongs to the class-III pyridoxal-phosphate-dependent aminotransferase family. ArgD subfamily. As to quaternary structure, homodimer. It depends on pyridoxal 5'-phosphate as a cofactor.

It is found in the cytoplasm. It catalyses the reaction N(2)-acetyl-L-ornithine + 2-oxoglutarate = N-acetyl-L-glutamate 5-semialdehyde + L-glutamate. It participates in amino-acid biosynthesis; L-arginine biosynthesis; N(2)-acetyl-L-ornithine from L-glutamate: step 4/4. The sequence is that of Acetylornithine aminotransferase 1 from Bordetella bronchiseptica (strain ATCC BAA-588 / NCTC 13252 / RB50) (Alcaligenes bronchisepticus).